An 88-amino-acid chain; its full sequence is Sec-independent protein translocase protein TatA (88 aa).

A helical membrane pass occupies residues 1–21 (MGGISITQLLIIASIVVVLFG). Positions 39 to 88 (FKKSMSEDDNTTSTSSDKSSQDADFTAPPIEPKANLACPDEAKNKDKEHV) are disordered. A compositionally biased stretch (low complexity) spans 49 to 62 (TTSTSSDKSSQDAD). Over residues 78–88 (DEAKNKDKEHV) the composition is skewed to basic and acidic residues.

This sequence belongs to the TatA/E family. As to quaternary structure, the Tat system comprises two distinct complexes: a TatABC complex, containing multiple copies of TatA, TatB and TatC subunits, and a separate TatA complex, containing only TatA subunits. Substrates initially bind to the TatABC complex, which probably triggers association of the separate TatA complex to form the active translocon.

It localises to the cell inner membrane. In terms of biological role, part of the twin-arginine translocation (Tat) system that transports large folded proteins containing a characteristic twin-arginine motif in their signal peptide across membranes. TatA could form the protein-conducting channel of the Tat system. The chain is Sec-independent protein translocase protein TatA from Sodalis glossinidius (strain morsitans).